The primary structure comprises 284 residues: Dihydropteroate synthase (284 aa).

The Pterin-binding domain maps to 6–265; the sequence is VQVIGVLNVT…DVRASVDALK (260 aa). Asparagine 13 is a Mg(2+) binding site. Residues threonine 53, aspartate 86, asparagine 105, aspartate 177, lysine 213, and 253–255 each bind (7,8-dihydropterin-6-yl)methyl diphosphate; that span reads RVH.

Belongs to the DHPS family. In terms of assembly, homodimer. Mg(2+) is required as a cofactor.

The catalysed reaction is (7,8-dihydropterin-6-yl)methyl diphosphate + 4-aminobenzoate = 7,8-dihydropteroate + diphosphate. It participates in cofactor biosynthesis; tetrahydrofolate biosynthesis; 7,8-dihydrofolate from 2-amino-4-hydroxy-6-hydroxymethyl-7,8-dihydropteridine diphosphate and 4-aminobenzoate: step 1/2. Is potently inhibited by the sulfone dapsone and the two sulfonamides sulfamethoxazole and sulfamethoxypyridazine, with Kis in the range of 12 to 32 nM. To a lesser extent, is also inhibited by p-aminosalicylate (PAS). In terms of biological role, catalyzes the condensation of para-aminobenzoate (pABA) with 6-hydroxymethyl-7,8-dihydropterin diphosphate (DHPt-PP) to form 7,8-dihydropteroate, the immediate precursor of folate derivatives. The chain is Dihydropteroate synthase (folP1) from Mycobacterium leprae (strain TN).